The following is an 837-amino-acid chain: Mannosyl-oligosaccharide glucosidase (837 aa).

The span at 1–10 (MARGERRRRA) shows a compositional bias: basic residues. Topologically, residues 1–38 (MARGERRRRAVPAEGVRTAERAARGGPGRRDGRGGGPR) are cytoplasmic. The segment at 1 to 39 (MARGERRRRAVPAEGVRTAERAARGGPGRRDGRGGGPRS) is disordered. An Endoplasmic reticulum targeting motif is present at residues 3–9 (RGERRRR). Residues 17–33 (RTAERAARGGPGRRDGR) show a composition bias toward basic and acidic residues. Residues 39-59 (STAGGVALAVVVLSLALGMSG) traverse the membrane as a helical; Signal-anchor for type II membrane protein segment. At 60–837 (RWVLAWYRAR…LVLLAMAEDY (778 aa)) the chain is on the lumenal side. Residues 76–137 (SAPPVLPADS…PGTPKLRHTC (62 aa)) form a required for endoplasmic reticulum targeting region. Residue Asp-583 is the Proton donor of the active site. A glycan (N-linked (GlcNAc...) asparagine) is linked at Asn-657. Residue Glu-807 is the Proton acceptor of the active site.

The protein belongs to the glycosyl hydrolase 63 family.

It is found in the endoplasmic reticulum membrane. It carries out the reaction N(4)-(alpha-D-Glc-(1-&gt;2)-alpha-D-Glc-(1-&gt;3)-alpha-D-Glc-(1-&gt;3)-alpha-D-Man-(1-&gt;2)-alpha-D-Man-(1-&gt;2)-alpha-D-Man-(1-&gt;3)-[alpha-D-Man-(1-&gt;2)-alpha-D-Man-(1-&gt;3)-[alpha-D-Man-(1-&gt;2)-alpha-D-Man-(1-&gt;6)]-alpha-D-Man-(1-&gt;6)]-beta-D-Man-(1-&gt;4)-beta-D-GlcNAc-(1-&gt;4)-beta-D-GlcNAc)-L-asparaginyl-[protein] + H2O = N(4)-(alpha-D-Glc-(1-&gt;3)-alpha-D-Glc-(1-&gt;3)-alpha-D-Man-(1-&gt;2)-alpha-D-Man-(1-&gt;2)-alpha-D-Man-(1-&gt;3)-[alpha-D-Man-(1-&gt;2)-alpha-D-Man-(1-&gt;3)-[alpha-D-Man-(1-&gt;2)-alpha-D-Man-(1-&gt;6)]-alpha-D-Man-(1-&gt;6)]-beta-D-Man-(1-&gt;4)-beta-D-GlcNAc-(1-&gt;4)-beta-D-GlcNAc)-L-asparaginyl-[protein] + beta-D-glucose. The protein operates within glycan metabolism; N-glycan degradation. Its activity is regulated as follows. Inhibited by 1-deoxynojirimycin (40% inhibition) and N,N-dimethyl-deoxynojirimycin (85% inhibition). In the context of N-glycan degradation, cleaves the distal alpha 1,2-linked glucose residue from the Glc(3)Man(9)GlcNAc(2) oligosaccharide precursor in a highly specific manner. This chain is Mannosyl-oligosaccharide glucosidase, found in Homo sapiens (Human).